A 363-amino-acid chain; its full sequence is Endopolygalacturonase 1 (363 aa).

The N-terminal stretch at 1–17 (MVSYLFVLGALASVAIA) is a signal peptide. The propeptide occupies 18–26 (SPVPELKAR). Cysteine 29 and cysteine 44 form a disulfide bridge. PbH1 repeat units follow at residues 188–209 (STGV…AVNS), 210–230 (GTNI…SIGS), 239–260 (VKSV…RIKT), and 268–290 (VSDI…VIEQ). Catalysis depends on aspartate 202, which acts as the Proton donor. A disulfide bond links cysteine 204 and cysteine 220. Asparagine 212 carries an N-linked (GlcNAc...) asparagine glycan. Residue histidine 224 is part of the active site. 2 cysteine pairs are disulfide-bonded: cysteine 330–cysteine 333 and cysteine 352–cysteine 363.

Belongs to the glycosyl hydrolase 28 family.

Its subcellular location is the secreted. The enzyme catalyses (1,4-alpha-D-galacturonosyl)n+m + H2O = (1,4-alpha-D-galacturonosyl)n + (1,4-alpha-D-galacturonosyl)m.. Functionally, involved in maceration and soft-rotting of plant tissue. Hydrolyzes the 1,4-alpha glycosidic bonds of de-esterified pectate in the smooth region of the plant cell wall. The sequence is that of Endopolygalacturonase 1 (PG1) from Colletotrichum lindemuthianum (Bean anthracnose fungus).